The primary structure comprises 217 residues: 3,4-dihydroxy-2-butanone 4-phosphate synthase (217 aa).

D-ribulose 5-phosphate is bound by residues R37 to E38, D42, R150 to T154, and E174. E38 contributes to the Mg(2+) binding site. H153 provides a ligand contact to Mg(2+).

The protein belongs to the DHBP synthase family. Homodimer. It depends on Mg(2+) as a cofactor. Requires Mn(2+) as cofactor.

It catalyses the reaction D-ribulose 5-phosphate = (2S)-2-hydroxy-3-oxobutyl phosphate + formate + H(+). It participates in cofactor biosynthesis; riboflavin biosynthesis; 2-hydroxy-3-oxobutyl phosphate from D-ribulose 5-phosphate: step 1/1. Its function is as follows. Catalyzes the conversion of D-ribulose 5-phosphate to formate and 3,4-dihydroxy-2-butanone 4-phosphate. This Shewanella baltica (strain OS223) protein is 3,4-dihydroxy-2-butanone 4-phosphate synthase.